The primary structure comprises 243 residues: Small ribosomal subunit protein uS3 (243 aa).

Residues 38 to 106 (IRKYLNARLA…DIQINIFEVK (69 aa)) enclose the KH type-2 domain. A disordered region spans residues 214–243 (PNFTQSKESGRGNNGGNNGGKNFKRKKNNR).

This sequence belongs to the universal ribosomal protein uS3 family. Part of the 30S ribosomal subunit. Forms a tight complex with proteins S10 and S14.

Functionally, binds the lower part of the 30S subunit head. Binds mRNA in the 70S ribosome, positioning it for translation. The chain is Small ribosomal subunit protein uS3 from Bacteroides thetaiotaomicron (strain ATCC 29148 / DSM 2079 / JCM 5827 / CCUG 10774 / NCTC 10582 / VPI-5482 / E50).